Reading from the N-terminus, the 485-residue chain is MTNTVSTMILFGSTGDLSQRMLLPSLYGLDADGLLADDLRIVCTSRSEYDTDGFRDFAEKALDRFVASDRLNDDAKAKFLNKLFYATVDITDPTQFGKLADLCGPVEKGIAIYLSTAPSLFEGAIAGLKQAGLAGPTSRLALEKPLGQDLASSDHINDAVLKVFSEKQVYRIDHYLGKETVQNLLTLRFGNALFEPLWNSKGIDHVQISVAETVGLEGRIGYFDGSGSLRDMVQSHILQLVALVAMEPPAHMEANAVRDEKVKVFRALRPINNDTVFTHTVTGQYGAGVSGGKEVAGYIDELGQPSDTETFVAIKAHVDNWRWQGVPFYIRTGKRLPARRSEIVVQFKPVPHSIFSSSGGILQPNKLRIVLQPDETIQISMMVKEPGLDRNGAHMREVWLDLSLTDVFKDRKRRIAYERLMLDLIEGDATLFVRRDEVEAQWVWIDGIREGWKANSMKPKTYVSGTWGPSTAIALAERDGVTWYD.

NADP(+) contacts are provided by residues R46, 89 to 90 (DI), and K144. Substrate is bound by residues H174, K178, E212, and D231. H236 serves as the catalytic Proton acceptor. Residue K334 participates in substrate binding.

This sequence belongs to the glucose-6-phosphate dehydrogenase family.

The catalysed reaction is D-glucose 6-phosphate + NADP(+) = 6-phospho-D-glucono-1,5-lactone + NADPH + H(+). The protein operates within carbohydrate degradation; pentose phosphate pathway; D-ribulose 5-phosphate from D-glucose 6-phosphate (oxidative stage): step 1/3. In terms of biological role, catalyzes the oxidation of glucose 6-phosphate to 6-phosphogluconolactone. The polypeptide is Glucose-6-phosphate 1-dehydrogenase (Zymomonas mobilis subsp. mobilis (strain ATCC 31821 / ZM4 / CP4)).